Here is a 148-residue protein sequence, read N- to C-terminus: Nucleoside diphosphate kinase (148 aa).

The ATP site is built by K9, F57, R85, T91, R102, and N112. H115 (pros-phosphohistidine intermediate) is an active-site residue.

The protein belongs to the NDK family. Mg(2+) is required as a cofactor.

It carries out the reaction a 2'-deoxyribonucleoside 5'-diphosphate + ATP = a 2'-deoxyribonucleoside 5'-triphosphate + ADP. The enzyme catalyses a ribonucleoside 5'-diphosphate + ATP = a ribonucleoside 5'-triphosphate + ADP. In terms of biological role, major role in the synthesis of nucleoside triphosphates other than ATP. The ATP gamma phosphate is transferred to the NDP beta phosphate via a ping-pong mechanism, using a phosphorylated active-site intermediate. This Helianthus annuus (Common sunflower) protein is Nucleoside diphosphate kinase.